A 290-amino-acid chain; its full sequence is Acetyl-coenzyme A carboxylase carboxyl transferase subunit beta (290 aa).

The CoA carboxyltransferase N-terminal domain maps to 28 to 290 (VMTKCPQCKK…GGGESGWWRN (263 aa)). Cysteine 32, cysteine 35, cysteine 51, and cysteine 54 together coordinate Zn(2+). The segment at 32–54 (CPQCKKIMYTKELVKNLRVCLSC) adopts a C4-type zinc-finger fold.

Belongs to the AccD/PCCB family. Acetyl-CoA carboxylase is a heterohexamer composed of biotin carboxyl carrier protein (AccB), biotin carboxylase (AccC) and two subunits each of ACCase subunit alpha (AccA) and ACCase subunit beta (AccD). Requires Zn(2+) as cofactor.

The protein localises to the cytoplasm. The catalysed reaction is N(6)-carboxybiotinyl-L-lysyl-[protein] + acetyl-CoA = N(6)-biotinyl-L-lysyl-[protein] + malonyl-CoA. Its pathway is lipid metabolism; malonyl-CoA biosynthesis; malonyl-CoA from acetyl-CoA: step 1/1. Its function is as follows. Component of the acetyl coenzyme A carboxylase (ACC) complex. Biotin carboxylase (BC) catalyzes the carboxylation of biotin on its carrier protein (BCCP) and then the CO(2) group is transferred by the transcarboxylase to acetyl-CoA to form malonyl-CoA. This is Acetyl-coenzyme A carboxylase carboxyl transferase subunit beta from Geobacillus thermodenitrificans (strain NG80-2).